The following is a 217-amino-acid chain: Probable transaldolase (217 aa).

Catalysis depends on K83, which acts as the Schiff-base intermediate with substrate.

It belongs to the transaldolase family. Type 3B subfamily.

It localises to the cytoplasm. The catalysed reaction is D-sedoheptulose 7-phosphate + D-glyceraldehyde 3-phosphate = D-erythrose 4-phosphate + beta-D-fructose 6-phosphate. It participates in carbohydrate degradation; pentose phosphate pathway; D-glyceraldehyde 3-phosphate and beta-D-fructose 6-phosphate from D-ribose 5-phosphate and D-xylulose 5-phosphate (non-oxidative stage): step 2/3. Transaldolase is important for the balance of metabolites in the pentose-phosphate pathway. This Paracoccus denitrificans (strain Pd 1222) protein is Probable transaldolase.